The sequence spans 493 residues: Aluminum-activated malate transporter 1 (493 aa).

Helical transmembrane passes span 28–48, 51–71, 104–124, 133–153, and 169–189; these read VGLA…GPFT, FGIN…FSVG, TVEP…STFV, KFDY…LSGF, and VVIG…VWAG. Residues serine 320 and serine 327 each carry the phosphoserine modification. Threonine 385 bears the Phosphothreonine mark. The segment covering 441–452 has biased composition (basic and acidic residues); that stretch reads DNDRSNNVDDSR. The disordered stretch occupies residues 441–460; it reads DNDRSNNVDDSRGGSSQDSC.

Belongs to the aromatic acid exporter (TC 2.A.85) family. In terms of processing, phosphorylated. A reversible phosphorylation is required for activation. In terms of tissue distribution, expressed in roots, but not in shoots. Detected in the root apex in absence of aluminum stress and in root apices, the stele and endodermis of the elongating zone of primary and lateral roots after aluminum stress. Not expressed in cortical and epidermal cells.

It localises to the cell membrane. With respect to regulation, activated by external aluminum. Malate transporter critical for aluminum tolerance. The STOP1 transcription factor is required for ALMT1 expression. This chain is Aluminum-activated malate transporter 1 (ALMT1), found in Arabidopsis thaliana (Mouse-ear cress).